The primary structure comprises 410 residues: Zinc transporter ttm-1 (410 aa).

2 stretches are compositionally biased toward low complexity: residues 1–13 (MTIS…SIRL) and 35–46 (SVSSSDSGVSAD). Positions 1–94 (MTISMISPSS…GAHKHSHDEK (94 aa)) are disordered. Over 1-103 (MTISMISPSS…KYQKGRRAEK (103 aa)) the chain is Cytoplasmic. A compositionally biased stretch (basic residues) spans 50–69 (HHHHGHGHGHSHGGHGHSHT). Residues 104–124 (VLWAVAALSAVFIAAEFVGGF) form a helical membrane-spanning segment. At 125–129 (WAQSL) the chain is on the extracellular side. A helical transmembrane segment spans residues 130–150 (AIMTDAGHMLSDLLSFIISIF). The Cytoplasmic portion of the chain corresponds to 151-171 (AIRCARLPASKRLSFGYERAE). A helical transmembrane segment spans residues 172 to 192 (VLGALTSVIILWVLTTVLVVV). Over 193–208 (AIQRIVNNEHEVDADV) the chain is Extracellular. A helical membrane pass occupies residues 209-229 (MLITAGVGVLFNIVMGLVLHF). The Cytoplasmic segment spans residues 230 to 258 (GTGGHGHTHGGHSSHGHAHDGKNVNVRAA). Residues 259-279 (LIHVIGDLVQSIGVLIAALII) form a helical membrane-spanning segment. Residue R280 is a topological domain, extracellular. A helical membrane pass occupies residues 281-301 (FTGWTLADPICTFLFSIIVLF). At 302-410 (TTVTVMRDIF…CDTCQQQETA (109 aa)) the chain is on the cytoplasmic side.

The protein belongs to the cation diffusion facilitator (CDF) transporter (TC 2.A.4) family. SLC30A subfamily. In terms of tissue distribution, isoform a: Expressed in the hypodermis and the intestine. Isoform b: Expressed in the intestine, head neurons, seam cells, hypodermis, and the vulva.

It localises to the cytoplasmic vesicle membrane. The protein localises to the apical cell membrane. In terms of biological role, promotes excretion of zinc from intestinal cells into the intestinal lumen in response to increased dietary zinc. Involved in cadmium resistance, possibly by promoting its transport from cells. Involved in resistance to B.thuringiensis pore-forming toxin Cry5B downstream of the sek-1 and pmk-1 MAPK kinase pathway. This Caenorhabditis elegans protein is Zinc transporter ttm-1.